Consider the following 427-residue polypeptide: Adenylosuccinate synthetase (427 aa).

GTP contacts are provided by residues 12-18 and 40-42; these read GDEGKGK and GHT. Asp13 functions as the Proton acceptor in the catalytic mechanism. 2 residues coordinate Mg(2+): Asp13 and Gly40. IMP is bound by residues 13-16, 38-41, Thr128, Arg142, Gln223, Thr238, and Arg302; these read DEGK and NAGH. Catalysis depends on His41, which acts as the Proton donor. 298 to 304 contacts substrate; that stretch reads TVTGRAR. Residues Arg304, 330-332, and 412-414 contribute to the GTP site; these read RLD and SVG.

The protein belongs to the adenylosuccinate synthetase family. Homodimer. It depends on Mg(2+) as a cofactor.

The protein localises to the cytoplasm. It carries out the reaction IMP + L-aspartate + GTP = N(6)-(1,2-dicarboxyethyl)-AMP + GDP + phosphate + 2 H(+). The protein operates within purine metabolism; AMP biosynthesis via de novo pathway; AMP from IMP: step 1/2. In terms of biological role, plays an important role in the de novo pathway of purine nucleotide biosynthesis. Catalyzes the first committed step in the biosynthesis of AMP from IMP. The polypeptide is Adenylosuccinate synthetase (Brachyspira hyodysenteriae (strain ATCC 49526 / WA1)).